Reading from the N-terminus, the 324-residue chain is Adenine deaminase (324 aa).

The Zn(2+) site is built by His-11, His-13, and His-189. The active-site Proton donor is Glu-192. A Zn(2+)-binding site is contributed by Asp-270. Asp-271 contributes to the substrate binding site.

This sequence belongs to the metallo-dependent hydrolases superfamily. Adenosine and AMP deaminases family. Adenine deaminase type 2 subfamily. Zn(2+) serves as cofactor.

It catalyses the reaction adenine + H2O + H(+) = hypoxanthine + NH4(+). Its function is as follows. Catalyzes the hydrolytic deamination of adenine to hypoxanthine. Plays an important role in the purine salvage pathway and in nitrogen catabolism. The polypeptide is Adenine deaminase (Rhizobium meliloti (strain 1021) (Ensifer meliloti)).